Here is a 509-residue protein sequence, read N- to C-terminus: Lanosterol 14-alpha demethylase (509 aa).

A helical transmembrane segment spans residues 30-50; sequence GNLLSMLLIACAFTLSLVYLF. Cys-455 provides a ligand contact to heme.

This sequence belongs to the cytochrome P450 family. Heme is required as a cofactor. Post-translationally, ubiquitinated by MARCHF6, leading to proteasomal degradation.

The protein resides in the endoplasmic reticulum membrane. The protein localises to the microsome membrane. It catalyses the reaction a 14alpha-methyl steroid + 3 reduced [NADPH--hemoprotein reductase] + 3 O2 = a Delta(14) steroid + formate + 3 oxidized [NADPH--hemoprotein reductase] + 4 H2O + 4 H(+). The enzyme catalyses lanosterol + 3 reduced [NADPH--hemoprotein reductase] + 3 O2 = 4,4-dimethyl-5alpha-cholesta-8,14,24-trien-3beta-ol + formate + 3 oxidized [NADPH--hemoprotein reductase] + 4 H2O + 4 H(+). The catalysed reaction is 24,25-dihydrolanosterol + 3 reduced [NADPH--hemoprotein reductase] + 3 O2 = 4,4-dimethyl-8,14-cholestadien-3beta-ol + formate + 3 oxidized [NADPH--hemoprotein reductase] + 4 H2O + 4 H(+). It carries out the reaction a 14alpha-methyl steroid + reduced [NADPH--hemoprotein reductase] + O2 = a 14alpha-hydroxymethyl steroid + oxidized [NADPH--hemoprotein reductase] + H2O + H(+). It catalyses the reaction a 14alpha-hydroxymethyl steroid + reduced [NADPH--hemoprotein reductase] + O2 = a 14alpha-formyl steroid + oxidized [NADPH--hemoprotein reductase] + 2 H2O + H(+). The enzyme catalyses a 14alpha-formyl steroid + reduced [NADPH--hemoprotein reductase] + O2 = a Delta(14) steroid + formate + oxidized [NADPH--hemoprotein reductase] + H2O + 2 H(+). The catalysed reaction is lanosterol + reduced [NADPH--hemoprotein reductase] + O2 = 32-hydroxylanosterol + oxidized [NADPH--hemoprotein reductase] + H2O + H(+). It carries out the reaction 32-hydroxylanosterol + reduced [NADPH--hemoprotein reductase] + O2 = 32-oxolanosterol + oxidized [NADPH--hemoprotein reductase] + 2 H2O + H(+). It catalyses the reaction 32-oxolanosterol + reduced [NADPH--hemoprotein reductase] + O2 = 4,4-dimethyl-5alpha-cholesta-8,14,24-trien-3beta-ol + formate + oxidized [NADPH--hemoprotein reductase] + H2O + 2 H(+). The enzyme catalyses 24,25-dihydrolanosterol + reduced [NADPH--hemoprotein reductase] + O2 = 32-hydroxy-24,25-dihydrolanosterol + oxidized [NADPH--hemoprotein reductase] + H2O + H(+). The catalysed reaction is 32-hydroxy-24,25-dihydrolanosterol + reduced [NADPH--hemoprotein reductase] + O2 = 32-oxo-24,25-dihydrolanosterol + oxidized [NADPH--hemoprotein reductase] + 2 H2O + H(+). It carries out the reaction 32-oxo-24,25-dihydrolanosterol + reduced [NADPH--hemoprotein reductase] + O2 = 4,4-dimethyl-8,14-cholestadien-3beta-ol + formate + oxidized [NADPH--hemoprotein reductase] + H2O + 2 H(+). It functions in the pathway steroid biosynthesis; zymosterol biosynthesis; zymosterol from lanosterol: step 1/6. Inhibited by azalanstat. Inhibited by azole antifungal agents ketoconazole, itraconazole and fluconazole. In terms of biological role, sterol 14alpha-demethylase that plays a critical role in the cholesterol biosynthesis pathway, being cholesterol the major sterol component in mammalian membranes as well as a precursor for bile acid and steroid hormone synthesis. Cytochrome P450 monooxygenase that catalyzes the three-step oxidative removal of the 14alpha-methyl group (C-32) of sterols such as lanosterol (lanosta-8,24-dien-3beta-ol) and 24,25-dihydrolanosterol (DHL) in the form of formate, and converts the sterols to 4,4-dimethyl-5alpha-cholesta-8,14,24-trien-3beta-ol and 4,4-dimethyl-8,14-cholestadien-3beta-ol, respectively, which are intermediates of cholesterol biosynthesis. Can also demethylate substrates not intrinsic to mammals, such as eburicol (24-methylene-24,25-dihydrolanosterol), but at a lower rate than DHL. The sequence is that of Lanosterol 14-alpha demethylase from Macaca fascicularis (Crab-eating macaque).